The following is a 646-amino-acid chain: Kinesin-like protein klp-20 (646 aa).

The 326-residue stretch at 6–331 (KVKVVVRCRP…LRYANRAKNI (326 aa)) folds into the Kinesin motor domain. 91–98 (GQTGTGKT) serves as a coordination point for ATP. Residues 342–552 (KDAQLRKFQL…LRKELLLNIA (211 aa)) adopt a coiled-coil conformation. Residues 525–550 (LEEDHQRQVEAMLDDIRQLRKELLLN) form an interaction with klp-11 region. Positions 623 to 646 (TAEHRPRTSSKKHRASIRLQQLLT) are disordered. The span at 629 to 638 (RTSSKKHRAS) shows a compositional bias: basic residues.

The protein belongs to the TRAFAC class myosin-kinesin ATPase superfamily. Kinesin family. Kinesin II subfamily. As to quaternary structure, component of the kinesin II motor complex, a heterotrimeric complex composed of kap-1, klp-11 and klp-20. Interacts (via C-terminus) with klp-11 (via C-terminus) to form a heterodimer. Furthermore, within the heterodimer, the C-termini of klp-20 and klp-11 interact to form a coiled coil (stalk) or tail domain, and this is necessary for association with kap-1, and kinesin II motor complex activity upon IFT cargo binding. Prior to cargo binding, the klp-11/klp-20 heterodimer is autoinhibited by the tail domain of the heterodimer, which folds onto the kinesin motor domain. Cargo binding to the heterodimer relieves the autoinhibition, and allows for an extended conformation of the tail domain, and function of the heterodimer.

The protein localises to the cell projection. It is found in the cilium. The protein resides in the cytoplasm. Its subcellular location is the cytoskeleton. Functionally, component of the kinesin II motor complex (composed of kap-1 and the heterodimeric motor proteins klp-11 and klp-20) which is required for intraflagellar transport (IFT). Heterodimerizes with klp-11 to form a 'processive' molecular motor upon IFT cargo binding, which, within the kinesin II motor complex, binds to and moves along microtubules in a unidirectional manner (without dissociation of the heterodimer), and in turn, is responsible for the IFT of cargo. Specifically, the kinesin II motor complex, together with the kinesin motor protein osm-3 moves along microtubules and is required for anterograde IFT along the middle segment of the sensory neuron cilia. In particular, the kinesin II motor complex delivers specific ciliary cargo proteins such as che-3 which are related to motility to ciliary tips. This is likely mediated by IFT complexes A and B. This chain is Kinesin-like protein klp-20, found in Caenorhabditis elegans.